The chain runs to 536 residues: GPI alpha-1,2-mannosyltransferase 3 (536 aa).

The N-linked (GlcNAc...) asparagine glycan is linked to Asn-15. Transmembrane regions (helical) follow at residues 40–60 and 118–138; these read IFGINITVFIVLVRLLNCVLV and VYLLVFVPRVFQALLAAYADV. A glycan (N-linked (GlcNAc...) asparagine) is linked at Asn-176. The next 6 membrane-spanning stretches (helical) occupy residues 206–226, 243–263, 297–317, 322–342, 344–364, and 369–389; these read LVSLAVVIRPTALIVWFPLIF, YFPIGVLALGVSTLIDSFFYG, GLPVVIGPHLPLVLHGCLLST, ILLLTIIWTTAVYSLLAHKEF, FIYPVLPFCMIFCGLSLAKLQ, and AAAGALLLFNLCPALYTGLVH. An N-linked (GlcNAc...) asparagine glycan is attached at Asn-467.

The protein belongs to the glycosyltransferase 22 family. PIGB subfamily.

The protein localises to the endoplasmic reticulum membrane. The protein operates within glycolipid biosynthesis; glycosylphosphatidylinositol-anchor biosynthesis. Alpha-1,2-mannosyltransferase that catalyzes the transfer of the third mannose, via an alpha-1,2 bond, from a dolichol-phosphate-mannose (Dol-P-Man) to an alpha-D-Man-(1-&gt;6)-2-PEtn-alpha-D-Man-(1-&gt;4)-alpha-D-GlcN-(1-&gt;6)-(1-radyl,2-acyl-sn-glycero-3-phospho)-2-acyl-inositol intermediate to generate an alpha-D-Man-(1-&gt;2)-alpha-D-Man-(1-&gt;6)-2-PEtn-alpha-D-Man-(1-&gt;4)-alpha-D-GlcN-(1-&gt;6)-(1-radyl,2-acyl-sn-glycero-3-phospho)-2-acyl-inositol (also termed H6) and participates in the nineth step of the glycosylphosphatidylinositol-anchor biosynthesis. May also add the third mannose to an alpha-D-Man-(1-&gt;6)-alpha-D-Man-(1-&gt;4)-alpha-D-GlcN-(1-&gt;6)-(1-radyl,2-acyl-sn-glycero-3-phospho)-2-acyl-inositol (also termed H3) intermediate generating an alpha-D-Man-(1-&gt;2)-alpha-D-Man-(1-&gt;6)-alpha-D-Man-(1-&gt;4)-alpha-D-GlcN-(1-&gt;6)-(1-radyl,2-acyl-sn-glycero-3-phospho)-2-acyl-inositol (also termed H4). In Danio rerio (Zebrafish), this protein is GPI alpha-1,2-mannosyltransferase 3.